The primary structure comprises 135 residues: Small ribosomal subunit protein bS6 (135 aa).

The interval 96 to 135 (HAEGPSIQMQKRDERERGDRGDRSDRGDRGDRGDRGGFRR) is disordered. The span at 105–135 (QKRDERERGDRGDRSDRGDRGDRGDRGGFRR) shows a compositional bias: basic and acidic residues.

The protein belongs to the bacterial ribosomal protein bS6 family.

Binds together with bS18 to 16S ribosomal RNA. The chain is Small ribosomal subunit protein bS6 from Cereibacter sphaeroides (strain ATCC 17029 / ATH 2.4.9) (Rhodobacter sphaeroides).